The primary structure comprises 525 residues: Nucleolar complex protein 4 homolog B (525 aa).

Residues 1-10 (MAARKAKHAF) are compositionally biased toward basic residues. Positions 1–21 (MAARKAKHAFRSQATQSDAER) are disordered. 3 helical membrane passes run 307–327 (AAYD…FILI), 358–378 (FFHL…LVAA), and 386–406 (LALT…CNLI).

It belongs to the CBF/MAK21 family.

The protein resides in the nucleus membrane. It localises to the nucleus. Its subcellular location is the nucleolus. The sequence is that of Nucleolar complex protein 4 homolog B (noc4l-b) from Xenopus laevis (African clawed frog).